Here is a 277-residue protein sequence, read N- to C-terminus: Thymidylate synthase (277 aa).

Arginine 21 serves as a coordination point for dUMP. Residue histidine 51 participates in (6R)-5,10-methylene-5,6,7,8-tetrahydrofolate binding. 139-140 (RR) is a dUMP binding site. Catalysis depends on cysteine 159, which acts as the Nucleophile. DUMP-binding positions include 179–182 (RSAD), asparagine 190, and 220–222 (HIY). Aspartate 182 lines the (6R)-5,10-methylene-5,6,7,8-tetrahydrofolate pocket. Alanine 276 is a (6R)-5,10-methylene-5,6,7,8-tetrahydrofolate binding site.

The protein belongs to the thymidylate synthase family. Bacterial-type ThyA subfamily. In terms of assembly, homodimer.

It is found in the cytoplasm. The catalysed reaction is dUMP + (6R)-5,10-methylene-5,6,7,8-tetrahydrofolate = 7,8-dihydrofolate + dTMP. It participates in pyrimidine metabolism; dTTP biosynthesis. Functionally, catalyzes the reductive methylation of 2'-deoxyuridine-5'-monophosphate (dUMP) to 2'-deoxythymidine-5'-monophosphate (dTMP) while utilizing 5,10-methylenetetrahydrofolate (mTHF) as the methyl donor and reductant in the reaction, yielding dihydrofolate (DHF) as a by-product. This enzymatic reaction provides an intracellular de novo source of dTMP, an essential precursor for DNA biosynthesis. The sequence is that of Thymidylate synthase from Roseobacter denitrificans (strain ATCC 33942 / OCh 114) (Erythrobacter sp. (strain OCh 114)).